A 278-amino-acid chain; its full sequence is Dermonecrotic toxin LspiSicTox-betaIE2iii (278 aa).

The active site involves His5. 2 residues coordinate Mg(2+): Glu25 and Asp27. His41 acts as the Nucleophile in catalysis. 2 disulfides stabilise this stretch: Cys45/Cys51 and Cys47/Cys190. Asp85 contacts Mg(2+).

Belongs to the arthropod phospholipase D family. Class II subfamily. Mg(2+) is required as a cofactor. As to expression, expressed by the venom gland.

The protein localises to the secreted. The enzyme catalyses an N-(acyl)-sphingosylphosphocholine = an N-(acyl)-sphingosyl-1,3-cyclic phosphate + choline. It carries out the reaction an N-(acyl)-sphingosylphosphoethanolamine = an N-(acyl)-sphingosyl-1,3-cyclic phosphate + ethanolamine. The catalysed reaction is a 1-acyl-sn-glycero-3-phosphocholine = a 1-acyl-sn-glycero-2,3-cyclic phosphate + choline. It catalyses the reaction a 1-acyl-sn-glycero-3-phosphoethanolamine = a 1-acyl-sn-glycero-2,3-cyclic phosphate + ethanolamine. In terms of biological role, dermonecrotic toxins cleave the phosphodiester linkage between the phosphate and headgroup of certain phospholipids (sphingolipid and lysolipid substrates), forming an alcohol (often choline) and a cyclic phosphate. This toxin acts on sphingomyelin (SM). It may also act on ceramide phosphoethanolamine (CPE), lysophosphatidylcholine (LPC) and lysophosphatidylethanolamine (LPE), but not on lysophosphatidylserine (LPS), and lysophosphatidylglycerol (LPG). It acts by transphosphatidylation, releasing exclusively cyclic phosphate products as second products. Induces dermonecrosis, hemolysis, increased vascular permeability, edema, inflammatory response, and platelet aggregation. In Loxosceles spinulosa (Recluse spider), this protein is Dermonecrotic toxin LspiSicTox-betaIE2iii.